A 408-amino-acid polypeptide reads, in one-letter code: Probable acyl-CoA dehydrogenase 6 (408 aa).

Residue E265 is the Proton acceptor of the active site.

This sequence belongs to the acyl-CoA dehydrogenase family. As to quaternary structure, homotetramer. Requires FAD as cofactor.

The enzyme catalyses 3-methylbutanoyl-CoA + oxidized [electron-transfer flavoprotein] + H(+) = 3-methylbut-2-enoyl-CoA + reduced [electron-transfer flavoprotein]. It participates in amino-acid degradation; L-leucine degradation; (S)-3-hydroxy-3-methylglutaryl-CoA from 3-isovaleryl-CoA: step 1/3. The protein is Probable acyl-CoA dehydrogenase 6 (acdh-6) of Caenorhabditis elegans.